The following is a 68-amino-acid chain: Peptide TsPep3 (68 aa).

The first 26 residues, 1-26 (MKLSCGFLLIFLVLSAMIATFSEVEA), serve as a signal peptide directing secretion. 4 disulfides stabilise this stretch: Cys-30/Cys-38, Cys-33/Cys-54, Cys-37/Cys-47, and Cys-42/Cys-52. The propeptide occupies 56–68 (GRSDLNEEFENYQ).

In terms of tissue distribution, expressed by the venom gland.

It is found in the secreted. Its function is as follows. Probable weak potassium channel blocker. In Tityus serrulatus (Brazilian scorpion), this protein is Peptide TsPep3.